We begin with the raw amino-acid sequence, 943 residues long: Isoleucine--tRNA ligase (943 aa).

The 'HIGH' region signature appears at 59-69 (PYANGQIHLGH). Glutamate 577 contacts L-isoleucyl-5'-AMP. Residues 618 to 622 (KMSKS) carry the 'KMSKS' region motif. An ATP-binding site is contributed by lysine 621. Residues cysteine 906, cysteine 909, cysteine 926, and cysteine 929 each coordinate Zn(2+).

It belongs to the class-I aminoacyl-tRNA synthetase family. IleS type 1 subfamily. As to quaternary structure, monomer. Zn(2+) is required as a cofactor.

It localises to the cytoplasm. The enzyme catalyses tRNA(Ile) + L-isoleucine + ATP = L-isoleucyl-tRNA(Ile) + AMP + diphosphate. Functionally, catalyzes the attachment of isoleucine to tRNA(Ile). As IleRS can inadvertently accommodate and process structurally similar amino acids such as valine, to avoid such errors it has two additional distinct tRNA(Ile)-dependent editing activities. One activity is designated as 'pretransfer' editing and involves the hydrolysis of activated Val-AMP. The other activity is designated 'posttransfer' editing and involves deacylation of mischarged Val-tRNA(Ile). The polypeptide is Isoleucine--tRNA ligase (Xanthomonas axonopodis pv. citri (strain 306)).